The following is a 159-amino-acid chain: 2-C-methyl-D-erythritol 2,4-cyclodiphosphate synthase (159 aa).

A divalent metal cation is bound by residues Asp8 and His10. Residues 8–10 (DSH) and 34–35 (HS) contribute to the 4-CDP-2-C-methyl-D-erythritol 2-phosphate site. His42 serves as a coordination point for a divalent metal cation. 4-CDP-2-C-methyl-D-erythritol 2-phosphate-binding positions include 56 to 58 (DIG), 61 to 65 (FPDSD), Phe139, and Arg142.

Belongs to the IspF family. Homotrimer. The cofactor is a divalent metal cation.

The catalysed reaction is 4-CDP-2-C-methyl-D-erythritol 2-phosphate = 2-C-methyl-D-erythritol 2,4-cyclic diphosphate + CMP. It functions in the pathway isoprenoid biosynthesis; isopentenyl diphosphate biosynthesis via DXP pathway; isopentenyl diphosphate from 1-deoxy-D-xylulose 5-phosphate: step 4/6. Its function is as follows. Involved in the biosynthesis of isopentenyl diphosphate (IPP) and dimethylallyl diphosphate (DMAPP), two major building blocks of isoprenoid compounds. Catalyzes the conversion of 4-diphosphocytidyl-2-C-methyl-D-erythritol 2-phosphate (CDP-ME2P) to 2-C-methyl-D-erythritol 2,4-cyclodiphosphate (ME-CPP) with a corresponding release of cytidine 5-monophosphate (CMP). This Syntrophus aciditrophicus (strain SB) protein is 2-C-methyl-D-erythritol 2,4-cyclodiphosphate synthase.